The sequence spans 87 residues: U3-theraphotoxin-Hhn1a 5 (87 aa).

An N-terminal signal peptide occupies residues 1–24 (MVNMKASMFLTFAGLVLLFVVCYA). The propeptide occupies 25 to 52 (SESEEKEFPKEMLSSIFAVDNDFKQEER). 3 disulfides stabilise this stretch: Cys54–Cys67, Cys61–Cys72, and Cys66–Cys79.

This sequence belongs to the neurotoxin 10 (Hwtx-1) family. 51 (Hntx-8) subfamily. Hntx-8 sub-subfamily. Expressed by the venom gland.

It localises to the secreted. Ion channel inhibitor. In Cyriopagopus hainanus (Chinese bird spider), this protein is U3-theraphotoxin-Hhn1a 5.